A 309-amino-acid polypeptide reads, in one-letter code: Thioredoxin reductase (309 aa).

Residue 35–42 coordinates FAD; that stretch reads EKQFPGGK. A disulfide bond links cysteine 134 and cysteine 137. Residue 277–286 participates in FAD binding; that stretch reads DIVDKNVRQI.

The protein belongs to the class-II pyridine nucleotide-disulfide oxidoreductase family. Homodimer. FAD serves as cofactor.

It is found in the cytoplasm. The catalysed reaction is [thioredoxin]-dithiol + NADP(+) = [thioredoxin]-disulfide + NADPH + H(+). This Ureaplasma parvum serovar 3 (strain ATCC 700970) protein is Thioredoxin reductase (trxB).